A 327-amino-acid polypeptide reads, in one-letter code: Phenylalanine--tRNA ligase alpha subunit (327 aa).

E253 is a binding site for Mg(2+).

Belongs to the class-II aminoacyl-tRNA synthetase family. Phe-tRNA synthetase alpha subunit type 1 subfamily. As to quaternary structure, tetramer of two alpha and two beta subunits. It depends on Mg(2+) as a cofactor.

It localises to the cytoplasm. The enzyme catalyses tRNA(Phe) + L-phenylalanine + ATP = L-phenylalanyl-tRNA(Phe) + AMP + diphosphate + H(+). This chain is Phenylalanine--tRNA ligase alpha subunit, found in Laribacter hongkongensis (strain HLHK9).